The chain runs to 101 residues: Small ribosomal subunit protein uS14 (101 aa).

This sequence belongs to the universal ribosomal protein uS14 family. In terms of assembly, part of the 30S ribosomal subunit. Contacts proteins S3 and S10.

Binds 16S rRNA, required for the assembly of 30S particles and may also be responsible for determining the conformation of the 16S rRNA at the A site. This chain is Small ribosomal subunit protein uS14, found in Photobacterium profundum (strain SS9).